The sequence spans 1476 residues: ABC-type transporter FG02316 (1476 aa).

N-linked (GlcNAc...) asparagine glycosylation is present at asparagine 2. A run of 10 helical transmembrane segments spans residues 23–43 (FTLLFEESILVVPITALLLLA), 64–84 (WLYCKIILCLLLLASQIAFLV), 97–117 (SLPAAALSIVASITLLGLSYV), 156–176 (AAITALISTVVKILMLSAETI), 266–286 (ILFIIFPRLCFIGFTFCQPFL), 305–325 (QGYGLIGAWFLVFIGLAVTTG), 384–404 (VWANLIEIVIAVYLLGRQLGL), 407–427 (LIPVGAAIFSIVGSVIAVSFV), 485–505 (LLIWNMVLAYLAPIFAPVLSF), and 532–552 (LFALLQEPLASFVTSLSSFMG). One can recognise an ABC transmembrane type-1 1 domain in the interval 274–552 (LCFIGFTFCQ…FVTSLSSFMG (279 aa)). Residues 586–615 (ISGVSSSEEKHPVSPIQESMMKTEPSGDSP) are disordered. The ABC transporter 1 domain occupies 622–847 (IRNASFGYDR…SDNYVSHSDV (226 aa)). Asparagine 624 carries N-linked (GlcNAc...) asparagine glycosylation. 654 to 661 (GPVGSGKS) is an ATP binding site. Asparagine 682, asparagine 696, asparagine 798, and asparagine 836 each carry an N-linked (GlcNAc...) asparagine glycan. Residues 842-870 (VSHSDVSSPDGARSKAPSSGPASSSAPVP) are disordered. The segment covering 855–870 (SKAPSSGPASSSAPVP) has biased composition (low complexity). A run of 6 helical transmembrane segments spans residues 906-926 (MNAIGWIPTMVFVLAICAYIF), 950-970 (LGYYLGVYAMLGALSIIFLVL), 1021-1041 (LIDMDLPLSALNTFATFVLCI), 1045-1065 (ILIAVGSYYTAIAFPFLLATL), 1137-1157 (WLTLVLDMIVTIIAVLVVVLV), and 1167-1187 (GLIGVALVNIIQFSQHLKLLM). Residues 916–1195 (VFVLAICAYI…LMTFWTTLET (280 aa)) form the ABC transmembrane type-1 2 domain. In terms of domain architecture, ABC transporter 2 spans 1232–1464 (ILFDQVSAGY…GPDASTFASM (233 aa)). N-linked (GlcNAc...) asparagine glycosylation is present at asparagine 1250. 1265-1272 (GRTGSGKS) contributes to the ATP binding site. The N-linked (GlcNAc...) asparagine glycan is linked to asparagine 1414.

The protein belongs to the ABC transporter superfamily. ABCC family. Conjugate transporter (TC 3.A.1.208) subfamily.

The protein localises to the cell membrane. In terms of biological role, ABC-type transporter; part of the gene cluster that mediates the biosynthesis of the fusahexin, a cyclic hydrophobic hexapeptide with the amino acid sequence cyclo-(D-Ala-L-Leu-D-allo-Thr-L-Pro-D-Leu-L-Leu) that plays an important role in cell surface hydrophobicity. The sequence is that of ABC-type transporter FG02316 from Gibberella zeae (strain ATCC MYA-4620 / CBS 123657 / FGSC 9075 / NRRL 31084 / PH-1) (Wheat head blight fungus).